We begin with the raw amino-acid sequence, 341 residues long: Methionine import ATP-binding protein MetN 2 (341 aa).

An ABC transporter domain is found at 2–241 (IQFKNISKHY…PQHPTTKTFI (240 aa)). 38–45 (GYSGAGKS) contacts ATP.

It belongs to the ABC transporter superfamily. Methionine importer (TC 3.A.1.24) family. In terms of assembly, the complex is composed of two ATP-binding proteins (MetN), two transmembrane proteins (MetI) and a solute-binding protein (MetQ).

Its subcellular location is the cell inner membrane. It carries out the reaction L-methionine(out) + ATP + H2O = L-methionine(in) + ADP + phosphate + H(+). It catalyses the reaction D-methionine(out) + ATP + H2O = D-methionine(in) + ADP + phosphate + H(+). Functionally, part of the ABC transporter complex MetNIQ involved in methionine import. Responsible for energy coupling to the transport system. In Acinetobacter baylyi (strain ATCC 33305 / BD413 / ADP1), this protein is Methionine import ATP-binding protein MetN 2.